Here is a 293-residue protein sequence, read N- to C-terminus: 4-diphosphocytidyl-2-C-methyl-D-erythritol kinase (293 aa).

Lysine 10 is an active-site residue. 94–104 (PVSAGLAGGSS) provides a ligand contact to ATP. Residue aspartate 136 is part of the active site.

This sequence belongs to the GHMP kinase family. IspE subfamily.

It catalyses the reaction 4-CDP-2-C-methyl-D-erythritol + ATP = 4-CDP-2-C-methyl-D-erythritol 2-phosphate + ADP + H(+). The protein operates within isoprenoid biosynthesis; isopentenyl diphosphate biosynthesis via DXP pathway; isopentenyl diphosphate from 1-deoxy-D-xylulose 5-phosphate: step 3/6. Functionally, catalyzes the phosphorylation of the position 2 hydroxy group of 4-diphosphocytidyl-2C-methyl-D-erythritol. The polypeptide is 4-diphosphocytidyl-2-C-methyl-D-erythritol kinase (Listeria monocytogenes serovar 1/2a (strain ATCC BAA-679 / EGD-e)).